The following is a 583-amino-acid chain: CTP synthase (583 aa).

The amidoligase domain stretch occupies residues M1 to L278. CTP is bound at residue S20. S20 contacts UTP. Residues S21–L26 and D78 contribute to the ATP site. Mg(2+) is bound by residues D78 and E152. CTP contacts are provided by residues D159 to E161, K199 to Q204, and K235. UTP is bound by residues K199–Q204 and K235. Positions R303–G551 constitute a Glutamine amidotransferase type-1 domain. L-glutamine is bound at residue G366. C393 functions as the Nucleophile; for glutamine hydrolysis in the catalytic mechanism. L-glutamine-binding positions include L394–Q397, E416, and R477. Residues H524 and E526 contribute to the active site. The interval E560–G583 is disordered.

Belongs to the CTP synthase family. Homotetramer.

The enzyme catalyses UTP + L-glutamine + ATP + H2O = CTP + L-glutamate + ADP + phosphate + 2 H(+). It catalyses the reaction L-glutamine + H2O = L-glutamate + NH4(+). The catalysed reaction is UTP + NH4(+) + ATP = CTP + ADP + phosphate + 2 H(+). It functions in the pathway pyrimidine metabolism; CTP biosynthesis via de novo pathway; CTP from UDP: step 2/2. Allosterically activated by GTP, when glutamine is the substrate; GTP has no effect on the reaction when ammonia is the substrate. The allosteric effector GTP functions by stabilizing the protein conformation that binds the tetrahedral intermediate(s) formed during glutamine hydrolysis. Inhibited by the product CTP, via allosteric rather than competitive inhibition. In terms of biological role, catalyzes the ATP-dependent amination of UTP to CTP with either L-glutamine or ammonia as the source of nitrogen. Regulates intracellular CTP levels through interactions with the four ribonucleotide triphosphates. The protein is CTP synthase of Mycolicibacterium paratuberculosis (strain ATCC BAA-968 / K-10) (Mycobacterium paratuberculosis).